The following is a 52-amino-acid chain: Conotoxin Cal6.36 (52 aa).

A signal peptide spans 1-22; that stretch reads MKVTCVLTLAVLILTVGQMVTA. 3 disulfides stabilise this stretch: Cys24/Cys39, Cys31/Cys43, and Cys38/Cys47.

In terms of tissue distribution, expressed by the venom duct.

Its subcellular location is the secreted. In terms of biological role, probable neurotoxin. This chain is Conotoxin Cal6.36, found in Californiconus californicus (California cone).